The sequence spans 189 residues: Peptidyl-tRNA hydrolase (189 aa).

Tyr-15 serves as a coordination point for tRNA. His-20 (proton acceptor) is an active-site residue. Residues Phe-66, Asn-68, and Asn-114 each coordinate tRNA.

The protein belongs to the PTH family. In terms of assembly, monomer.

The protein resides in the cytoplasm. It catalyses the reaction an N-acyl-L-alpha-aminoacyl-tRNA + H2O = an N-acyl-L-amino acid + a tRNA + H(+). In terms of biological role, hydrolyzes ribosome-free peptidyl-tRNAs (with 1 or more amino acids incorporated), which drop off the ribosome during protein synthesis, or as a result of ribosome stalling. Its function is as follows. Catalyzes the release of premature peptidyl moieties from peptidyl-tRNA molecules trapped in stalled 50S ribosomal subunits, and thus maintains levels of free tRNAs and 50S ribosomes. The sequence is that of Peptidyl-tRNA hydrolase from Streptococcus equi subsp. zooepidemicus (strain H70).